Reading from the N-terminus, the 368-residue chain is Probable ubiquitin receptor RAD23a (368 aa).

Residues 1–77 form the Ubiquitin-like domain; that stretch reads MKLTVKTLKG…GFLVVMLSKS (77 aa). Residues 80 to 111 are compositionally biased toward low complexity; that stretch reads ASSAGPSSTQPTSTTTSTISSTTLAAPSTTQS. Residues 80-136 are disordered; the sequence is ASSAGPSSTQPTSTTTSTISSTTLAAPSTTQSIAVPASNSTPVQEQPTAQSDTYGQA. Residues 116 to 136 are compositionally biased toward polar residues; it reads ASNSTPVQEQPTAQSDTYGQA. The UBA 1 domain occupies 142–185; the sequence is SGSSIEQMVQQIMEMGGGSWDKETVTRALRAAYNNPERAVDYLY. A disordered region spans residues 202-222; it reads VGSGRELTAPPPSGGPNSSPL. The STI1 domain occupies 239 to 282; that stretch reads GTLEFLRGNDQFQQLRSMVNSNPQILQPMLQELGKQNPQLLRLI. The UBA 2 domain maps to 320–360; it reads VTPEEQESIERLEAMGFDRAIVIEAFLSCDRNEELAANYLL.

This sequence belongs to the RAD23 family. As to quaternary structure, interacts with 'Lys-48'-linked polyubiquitin chains. Interacts with RPN10. Widely expressed in the whole plant.

Its subcellular location is the nucleus. The protein localises to the cytoplasm. Functionally, may be involved in nucleotide excision repair. Binds and presumably selects ubiquitin-conjugates for destruction. Prefers multiubiquitin chains rather than single ubiquitins, with a binding affinity for 'Lys-48'-linked ubiquitin chains. Acts as a ubiquitin receptor that associates with the 26S proteasomal docking subunit RPN10 for the indirect recognition of ubiquitinated substrates of ubiquitin/26S proteasome-mediated proteolysis (UPP). Involved in UV tolerance in roots, specifically in dark conditions. In Arabidopsis thaliana (Mouse-ear cress), this protein is Probable ubiquitin receptor RAD23a.